We begin with the raw amino-acid sequence, 105 residues long: Large ribosomal subunit protein uL24 (105 aa).

This sequence belongs to the universal ribosomal protein uL24 family. In terms of assembly, part of the 50S ribosomal subunit.

Its function is as follows. One of two assembly initiator proteins, it binds directly to the 5'-end of the 23S rRNA, where it nucleates assembly of the 50S subunit. In terms of biological role, one of the proteins that surrounds the polypeptide exit tunnel on the outside of the subunit. The chain is Large ribosomal subunit protein uL24 from Novosphingobium aromaticivorans (strain ATCC 700278 / DSM 12444 / CCUG 56034 / CIP 105152 / NBRC 16084 / F199).